Consider the following 98-residue polypeptide: Large ribosomal subunit protein bL25 (98 aa).

It belongs to the bacterial ribosomal protein bL25 family. In terms of assembly, part of the 50S ribosomal subunit; part of the 5S rRNA/L5/L18/L25 subcomplex. Contacts the 5S rRNA. Binds to the 5S rRNA independently of L5 and L18.

Its function is as follows. This is one of the proteins that binds to the 5S RNA in the ribosome where it forms part of the central protuberance. The sequence is that of Large ribosomal subunit protein bL25 from Synechocystis sp. (strain ATCC 27184 / PCC 6803 / Kazusa).